A 260-amino-acid chain; its full sequence is Dehydrin ERD10 (260 aa).

3 disordered regions span residues 1–187 (MAEE…EEEK), 197–216 (KLPG…TTPL), and 240–260 (KLPG…KVSD). Ala-2 carries the post-translational modification N-acetylalanine. Residues 26 to 44 (EIKERGMFDFLKKKEEVKP) are compositionally biased toward basic and acidic residues. Phosphoserine is present on Ser-61. 5 stretches are compositionally biased toward basic and acidic residues: residues 67–102 (VAKH…DKLH), 130–140 (IVEGDHVKTVE), 148–162 (DRIK…KPGG), 176–187 (SVEDHKPEEEEK), and 197–207 (KLPGHSKKPED). 2 consecutive repeat copies span residues 184 to 204 (EEEK…HSKK) and 227 to 247 (PEEK…YHAK). The tract at residues 184–247 (EEEKKGFMDK…KEKLPGYHAK (64 aa)) is 2 X 21 AA repeats, Lys-rich.

The protein belongs to the plant dehydrin family. In terms of tissue distribution, in stems, cauline leaves, roots and flowers. Low levels found in maturing seeds. Absent in dry seeds.

This Arabidopsis thaliana (Mouse-ear cress) protein is Dehydrin ERD10 (ERD10).